The primary structure comprises 271 residues: Replication-associated protein A (271 aa).

The CRESS-DNA virus Rep endonuclease domain maps to 11 to 114 (LHRNANTFLT…PLAVFERGTF (104 aa)). Positions 18-21 (FLTY) match the RCR-1 motif. Positions 52, 60, and 62 each coordinate a divalent metal cation. The RCR-2 signature appears at 60–62 (HLH). The For DNA cleavage activity role is filled by Y100. The short motif at 100-103 (YILK) is the RCR-3 element. A divalent metal cation is bound at residue E104. Residues 174 to 186 (SANKLFPDIQEEF) are oligomerization. The tract at residues 197-201 (LLCNE) is binding to RBR1. Residues 220-229 (MLLQPTCYTV) are transactivation. The span at 244–264 (SQQMKDQESRASTSSVQQGQG) shows a compositional bias: polar residues. A disordered region spans residues 244-271 (SQQMKDQESRASTSSVQQGQGNLLGPEV).

It belongs to the geminiviridae Rep protein family. Homooligomer. Interacts with host retinoblastoma-related protein 1 (RBR1), and may thereby deregulate the host cell cycle. Part of the C- and V-complexes which are RepA-Rep-DNA complexes involved in the c-sense and v-sense transcription. It depends on Mg(2+) as a cofactor. Mn(2+) is required as a cofactor.

It is found in the host nucleus. It localises to the host cytoplasm. Implicated in enhancement of V-sense gene expression. Acts a an inhibitor of C-sense gene transcription. The polypeptide is Replication-associated protein A (Avena sativa (Oat)).